Consider the following 119-residue polypeptide: Acidic phospholipase A2 2 (119 aa).

Intrachain disulfides connect C11-C71, C26-C118, C28-C44, C43-C99, C50-C92, C60-C85, and C78-C90. Positions 27, 29, and 31 each coordinate Ca(2+). H47 is a catalytic residue. D48 provides a ligand contact to Ca(2+). D93 is a catalytic residue.

It belongs to the phospholipase A2 family. Group I subfamily. D49 sub-subfamily. In terms of assembly, homotrimer. The cofactor is Ca(2+). Expressed by the venom gland.

The protein resides in the secreted. It catalyses the reaction a 1,2-diacyl-sn-glycero-3-phosphocholine + H2O = a 1-acyl-sn-glycero-3-phosphocholine + a fatty acid + H(+). PLA2 catalyzes the calcium-dependent hydrolysis of the 2-acyl groups in 3-sn-phosphoglycerides. This chain is Acidic phospholipase A2 2, found in Naja naja (Indian cobra).